The following is a 358-amino-acid chain: SPbeta prophage-derived probable integrase/recombinase YopP (358 aa).

A Core-binding (CB) domain is found at 23–114; the sequence is NKDIRSSSGN…SLKMLYTYLE (92 aa). Positions 137 to 319 constitute a Tyr recombinase domain; that stretch reads KNWDKTTQTE…NIANSAGVTM (183 aa). Active-site residues include Arg-178, Lys-206, His-268, and His-295. The active-site O-(3'-phospho-DNA)-tyrosine intermediate is the Tyr-304.

This sequence belongs to the 'phage' integrase family.

Functionally, probable recombinase that does not seem to have a role in chromosome dimer resolution per se but rather may have some facilitative role during chromosome partitioning in general. This Bacillus subtilis (strain 168) protein is SPbeta prophage-derived probable integrase/recombinase YopP (yopP).